Consider the following 397-residue polypeptide: 3-ketoacyl-CoA thiolase, mitochondrial (397 aa).

The N-terminal 16 residues, 1-16 (MALLRGVFVVAAKRTP), are a transit peptide targeting the mitochondrion; not cleaved. At Lys-25 the chain carries N6-acetyllysine; alternate. N6-succinyllysine; alternate is present on Lys-25. N6-succinyllysine is present on Lys-45. Residue Cys-92 is the Acyl-thioester intermediate of the active site. The residue at position 119 (Thr-119) is a Phosphothreonine. The residue at position 121 (Ser-121) is a Phosphoserine. Phosphotyrosine is present on Tyr-127. The residue at position 136 (Thr-136) is a Phosphothreonine. The residue at position 137 (Lys-137) is an N6-acetyllysine; alternate. An N6-succinyllysine; alternate modification is found at Lys-137. Ser-140 carries the post-translational modification Phosphoserine. N6-acetyllysine; alternate is present on residues Lys-143, Lys-171, Lys-191, and Lys-209. An N6-succinyllysine; alternate mark is found at Lys-143, Lys-171, Lys-191, and Lys-209. An N6-succinyllysine mark is found at Lys-211, Lys-212, and Lys-214. CoA-binding residues include Arg-224 and Thr-227. Position 234 is an N6-acetyllysine; alternate (Lys-234). Lys-234 bears the N6-succinyllysine; alternate mark. Lys-240 is subject to N6-succinyllysine. Lys-241 is modified (N6-acetyllysine). Ser-251 is a CoA binding site. Residues Lys-269 and Lys-270 each carry the N6-acetyllysine modification. Residue Lys-305 is modified to N6-acetyllysine; alternate. Position 305 is an N6-succinyllysine; alternate (Lys-305). Ser-310 bears the Phosphoserine mark. At Lys-312 the chain carries N6-acetyllysine; alternate. Lys-312 carries the N6-succinyllysine; alternate modification. Ser-333 carries the phosphoserine modification. 2 positions are modified to N6-acetyllysine: Lys-340 and Lys-375. The active-site Proton donor/acceptor is Cys-382.

Belongs to the thiolase-like superfamily. Thiolase family. In terms of assembly, homotetramer. Interacts with BNIP3.

The protein resides in the mitochondrion. The catalysed reaction is an acyl-CoA + acetyl-CoA = a 3-oxoacyl-CoA + CoA. It carries out the reaction 2 acetyl-CoA = acetoacetyl-CoA + CoA. It catalyses the reaction acetyl-CoA + H2O = acetate + CoA + H(+). The enzyme catalyses propanoyl-CoA + H2O = propanoate + CoA + H(+). The catalysed reaction is butanoyl-CoA + H2O = butanoate + CoA + H(+). It carries out the reaction hexanoyl-CoA + H2O = hexanoate + CoA + H(+). It catalyses the reaction octanoyl-CoA + H2O = octanoate + CoA + H(+). The enzyme catalyses decanoyl-CoA + H2O = decanoate + CoA + H(+). The catalysed reaction is dodecanoyl-CoA + H2O = dodecanoate + CoA + H(+). It carries out the reaction tetradecanoyl-CoA + H2O = tetradecanoate + CoA + H(+). It catalyses the reaction hexadecanoyl-CoA + H2O = hexadecanoate + CoA + H(+). It functions in the pathway lipid metabolism; fatty acid beta-oxidation. Functionally, in the production of energy from fats, this is one of the enzymes that catalyzes the last step of the mitochondrial beta-oxidation pathway, an aerobic process breaking down fatty acids into acetyl-CoA. Using free coenzyme A/CoA, catalyzes the thiolytic cleavage of medium- to long-chain unbranched 3-oxoacyl-CoAs into acetyl-CoA and a fatty acyl-CoA shortened by two carbon atoms. Also catalyzes the condensation of two acetyl-CoA molecules into acetoacetyl-CoA and could be involved in the production of ketone bodies. Also displays hydrolase activity on various fatty acyl-CoAs. Thereby, could be responsible for the production of acetate in a side reaction to beta-oxidation. Abolishes BNIP3-mediated apoptosis and mitochondrial damage. This is 3-ketoacyl-CoA thiolase, mitochondrial (ACAA2) from Pongo abelii (Sumatran orangutan).